The following is a 419-amino-acid chain: Keratin, type I cytoskeletal 47 kDa (419 aa).

Residues 1–81 form a head region; sequence MSFRSSSSYS…SSSFSNFGGN (81 aa). The coil 1A stretch occupies residues 82–117; that stretch reads DKQTMQNLNDRLASYLEKVRALEAANADLELKIREW. The 316-residue stretch at 82–397 folds into the IF rod domain; that stretch reads DKQTMQNLND…RLLEGEFGSL (316 aa). The tract at residues 118 to 139 is linker 1; sequence YEKQKGSGIGAGSKDFSKYFEI. The segment at 140–231 is coil 1B; that stretch reads ISDLRNKILS…KNHEEEMSIA (92 aa). The linker 12 stretch occupies residues 232–254; sequence KSSSAGQVNVEMDAAPGIDLNKI. The tract at residues 255–393 is coil 2; it reads LSDMRADYET…ETYRRLLEGE (139 aa). Residues 394 to 419 are tail; that stretch reads FGSLKSSIVQATEVSTSQSSSSSKKD.

This sequence belongs to the intermediate filament family. In terms of assembly, heterotetramer of two type I and two type II keratins.

This chain is Keratin, type I cytoskeletal 47 kDa (xk81b2), found in Xenopus laevis (African clawed frog).